The chain runs to 257 residues: Caspase-14 (257 aa).

Catalysis depends on residues His93 and Cys136. The propeptide occupies 156–167 (DEELGGDEVAVL).

It belongs to the peptidase C14A family. As to quaternary structure, heterodimer of a large and a small subunit, both processed from the precursor; the mature active form is a p17/p10 dimer and the intermediate form a p20/p8 dimer. In terms of processing, maturation by proteolytic processing appears to be a two-step process. The precursor is processed by KLK7 to yield the p20/p8 intermediate form which acts the precursor to yield the p17/p10 mature form. Initially it was reported that cleavage by granzyme B, caspase-8 and -10 generates the two active subunits, however the physiological relevance has not been established. Embryo, adult liver and less in adult brain and kidney. Expressed in differentiating keratinocytes of embryonic skin (at protein level). Expressed in keratinocytes of adult skin suprabasal layers (at protein level).

The protein localises to the cytoplasm. The protein resides in the nucleus. Non-apoptotic caspase which is involved in epidermal differentiation. Seems to play a role in keratinocyte differentiation and is required for cornification. Regulates maturation of the epidermis by proteolytically processing filaggrin. In vitro is equally active on the synthetic caspase substrates WEHD-ACF and IETD-AFC. Involved in processing of prosaposin in the epidermis. May be involved in retinal pigment epithelium cell barrier function. This is Caspase-14 (Casp14) from Mus musculus (Mouse).